We begin with the raw amino-acid sequence, 201 residues long: Holliday junction branch migration complex subunit RuvA (201 aa).

Residues 1 to 64 (MYEYIRGQFQ…EDFIGLYGFT (64 aa)) form a domain I region. Residues 65–143 (TKEELEMFKL…PDELTSEEEQ (79 aa)) form a domain II region. The segment at 144–152 (LIEGINDNS) is flexible linker. Positions 153–201 (DYSFNINETLSALMALGYTEKEAQKALEKVDKTLSIENMIKESLKLLMR) are domain III.

The protein belongs to the RuvA family. In terms of assembly, homotetramer. Forms an RuvA(8)-RuvB(12)-Holliday junction (HJ) complex. HJ DNA is sandwiched between 2 RuvA tetramers; dsDNA enters through RuvA and exits via RuvB. An RuvB hexamer assembles on each DNA strand where it exits the tetramer. Each RuvB hexamer is contacted by two RuvA subunits (via domain III) on 2 adjacent RuvB subunits; this complex drives branch migration. In the full resolvosome a probable DNA-RuvA(4)-RuvB(12)-RuvC(2) complex forms which resolves the HJ.

It localises to the cytoplasm. Functionally, the RuvA-RuvB-RuvC complex processes Holliday junction (HJ) DNA during genetic recombination and DNA repair, while the RuvA-RuvB complex plays an important role in the rescue of blocked DNA replication forks via replication fork reversal (RFR). RuvA specifically binds to HJ cruciform DNA, conferring on it an open structure. The RuvB hexamer acts as an ATP-dependent pump, pulling dsDNA into and through the RuvAB complex. HJ branch migration allows RuvC to scan DNA until it finds its consensus sequence, where it cleaves and resolves the cruciform DNA. This chain is Holliday junction branch migration complex subunit RuvA, found in Clostridium perfringens (strain SM101 / Type A).